The chain runs to 332 residues: L-lactate dehydrogenase A chain (332 aa).

Residues 29 to 57 and Arg99 each bind NAD(+); that span reads GAVGMACAISILMKDLADELALVDVMEDK. Arg106, Asn138, and Arg169 together coordinate substrate. Asn138 serves as a coordination point for NAD(+). The active-site Proton acceptor is the His193. Thr248 lines the substrate pocket.

This sequence belongs to the LDH/MDH superfamily. LDH family. Homotetramer.

It is found in the cytoplasm. The catalysed reaction is (S)-lactate + NAD(+) = pyruvate + NADH + H(+). The protein operates within fermentation; pyruvate fermentation to lactate; (S)-lactate from pyruvate: step 1/1. Interconverts simultaneously and stereospecifically pyruvate and lactate with concomitant interconversion of NADH and NAD(+). This chain is L-lactate dehydrogenase A chain (LDHA), found in Sceloporus undulatus (Eastern fence lizard).